The chain runs to 173 residues: Superoxide dismutase [Cu-Zn] (173 aa).

The N-terminal stretch at 1–22 (MNKAKTLLFTALAFGLSHQALA) is a signal peptide. Residues H67, H69, and H92 each contribute to the Cu cation site. A disulfide bridge connects residues C74 and C169. Zn(2+) is bound by residues H92, H101, H110, and D113. Position 147 (H147) interacts with Cu cation.

It belongs to the Cu-Zn superoxide dismutase family. In terms of assembly, homodimer. The cofactor is Cu cation. Zn(2+) serves as cofactor.

The protein resides in the periplasm. It carries out the reaction 2 superoxide + 2 H(+) = H2O2 + O2. Functionally, destroys radicals which are normally produced within the cells and which are toxic to biological systems. The chain is Superoxide dismutase [Cu-Zn] (sodC) from Photobacterium leiognathi.